A 378-amino-acid chain; its full sequence is SWI/SNF-related matrix-associated actin-dependent regulator of chromatin subfamily B member 1 (378 aa).

The segment at 1-106 (MIMALSKTFG…DEKYKAVSIS (106 aa)) is DNA-binding.

It belongs to the SNF5 family. In terms of assembly, component of the multiprotein chromatin-remodeling complexes SWI/SNF. Component of neural progenitors-specific chromatin remodeling complex (npBAF complex) and the neuron-specific chromatin remodeling complex (nBAF complex). Component of the BAF (SWI/SNF) chromatin remodeling complex. Component of the SWI/SNF-B (PBAF) chromatin remodeling complex. Binds to double-stranded DNA.

Its subcellular location is the nucleus. In terms of biological role, involved in chromatin-remodeling. Core component of the BAF (SWI/SNF) complex. This ATP-dependent chromatin-remodeling complex plays important roles in cell proliferation and differentiation, in cellular antiviral activities and inhibition of tumor formation. Belongs to the neural progenitors-specific chromatin remodeling complex (npBAF complex) and the neuron-specific chromatin remodeling complex (nBAF complex) and may play a role in neural development. The chain is SWI/SNF-related matrix-associated actin-dependent regulator of chromatin subfamily B member 1 (smarcb1) from Xenopus laevis (African clawed frog).